The primary structure comprises 154 residues: NADPH-dependent 7-cyano-7-deazaguanine reductase (154 aa).

Cys-52 acts as the Thioimide intermediate in catalysis. Residue Asp-59 is the Proton donor of the active site. Substrate is bound by residues 74–76 (VES) and 93–94 (HE).

The protein belongs to the GTP cyclohydrolase I family. QueF type 1 subfamily.

The protein resides in the cytoplasm. It catalyses the reaction 7-aminomethyl-7-carbaguanine + 2 NADP(+) = 7-cyano-7-deazaguanine + 2 NADPH + 3 H(+). Its pathway is tRNA modification; tRNA-queuosine biosynthesis. In terms of biological role, catalyzes the NADPH-dependent reduction of 7-cyano-7-deazaguanine (preQ0) to 7-aminomethyl-7-deazaguanine (preQ1). The protein is NADPH-dependent 7-cyano-7-deazaguanine reductase of Ruegeria sp. (strain TM1040) (Silicibacter sp.).